Consider the following 246-residue polypeptide: Probable transcriptional regulatory protein HD_0596 (246 aa).

This sequence belongs to the TACO1 family.

The protein localises to the cytoplasm. This is Probable transcriptional regulatory protein HD_0596 from Haemophilus ducreyi (strain 35000HP / ATCC 700724).